Consider the following 252-residue polypeptide: Movement protein (252 aa).

The segment at Tyr-222–Ser-252 is disordered.

This sequence belongs to the tobamovirus movement protein family.

Transports viral genome to neighboring plant cells directly through plasmosdesmata, without any budding. The movement protein allows efficient cell to cell propagation, by bypassing the host cell wall barrier. Displays RNA-binding activity. This Bidens pilosa (Hairy beggarticks) protein is Movement protein.